A 256-amino-acid chain; its full sequence is tRNA (guanine-N(1)-)-methyltransferase (256 aa).

Residues glycine 113 and 132–137 (VGDYVL) each bind S-adenosyl-L-methionine.

It belongs to the RNA methyltransferase TrmD family. Homodimer.

Its subcellular location is the cytoplasm. It catalyses the reaction guanosine(37) in tRNA + S-adenosyl-L-methionine = N(1)-methylguanosine(37) in tRNA + S-adenosyl-L-homocysteine + H(+). Specifically methylates guanosine-37 in various tRNAs. This Coprothermobacter proteolyticus (strain ATCC 35245 / DSM 5265 / OCM 4 / BT) protein is tRNA (guanine-N(1)-)-methyltransferase.